Here is a 462-residue protein sequence, read N- to C-terminus: MELRLYNTLTRSKDAFRPLDPNLVRLYVCGPTVYDHAHIGNARPVIVFDVLFRLLRRLYGADHVRYVRNITDVDDKINARAAERSISIRELTEETYAWFRDDTAALGCLRPDVEPRATEHILEMQALIERLVASGHAYVAEEHVLFHVPSMPEYGKLSRRPLDEMLNGARVDVAPFKRDPMDFVLWKPSTEGQPGWPSPCGIATPGRPGWHIECSAMSWRHLGETFDIHGGGIDLVFPHHENEIAQSRCAFDSGSMAQVWMHNGFLLVEGEKMSKSLGNFVTIRELLTDWPGEVLRLAMLSTHYRQPINWTRQGIGFAAKTLDKWYRVIGDVEAETGEGNPFESEIADRLGDDLNSPSAITHLHHLADVAEHEDASSALKRRFKSAANLMGLLHETETEWRARQRAAVSVDPDAIAALIADRNAARKARDFATADHIREQLASQGIVLMDNKDGTTSWELTR.

Residue Cys29 coordinates Zn(2+). A 'HIGH' region motif is present at residues 31–41 (PTVYDHAHIGN). Zn(2+) is bound by residues Cys214, His239, and Glu243. The short motif at 272–276 (KMSKS) is the 'KMSKS' region element. Lys275 contributes to the ATP binding site.

The protein belongs to the class-I aminoacyl-tRNA synthetase family. As to quaternary structure, monomer. Zn(2+) is required as a cofactor.

Its subcellular location is the cytoplasm. The enzyme catalyses tRNA(Cys) + L-cysteine + ATP = L-cysteinyl-tRNA(Cys) + AMP + diphosphate. The chain is Cysteine--tRNA ligase from Azorhizobium caulinodans (strain ATCC 43989 / DSM 5975 / JCM 20966 / LMG 6465 / NBRC 14845 / NCIMB 13405 / ORS 571).